Reading from the N-terminus, the 307-residue chain is 4-diphosphocytidyl-2-C-methyl-D-erythritol kinase (307 aa).

Lysine 9 is a catalytic residue. 94–104 (PIGAGLAGGSS) provides a ligand contact to ATP. Aspartate 136 is an active-site residue.

This sequence belongs to the GHMP kinase family. IspE subfamily.

The enzyme catalyses 4-CDP-2-C-methyl-D-erythritol + ATP = 4-CDP-2-C-methyl-D-erythritol 2-phosphate + ADP + H(+). The protein operates within isoprenoid biosynthesis; isopentenyl diphosphate biosynthesis via DXP pathway; isopentenyl diphosphate from 1-deoxy-D-xylulose 5-phosphate: step 3/6. Functionally, catalyzes the phosphorylation of the position 2 hydroxy group of 4-diphosphocytidyl-2C-methyl-D-erythritol. In Synechococcus sp. (strain CC9902), this protein is 4-diphosphocytidyl-2-C-methyl-D-erythritol kinase.